The primary structure comprises 956 residues: Protein translocase subunit SecA (956 aa).

ATP contacts are provided by residues Gln87, 105–109, and Asp524; that span reads GEGKT. Zn(2+) is bound by residues Cys940, Cys942, Cys951, and His952.

It belongs to the SecA family. Monomer and homodimer. Part of the essential Sec protein translocation apparatus which comprises SecA, SecYEG and auxiliary proteins SecDF-YajC and YidC. It depends on Zn(2+) as a cofactor.

The protein localises to the cell inner membrane. The protein resides in the cytoplasm. It catalyses the reaction ATP + H2O + cellular proteinSide 1 = ADP + phosphate + cellular proteinSide 2.. Its function is as follows. Part of the Sec protein translocase complex. Interacts with the SecYEG preprotein conducting channel. Has a central role in coupling the hydrolysis of ATP to the transfer of proteins into and across the cell membrane, serving both as a receptor for the preprotein-SecB complex and as an ATP-driven molecular motor driving the stepwise translocation of polypeptide chains across the membrane. The chain is Protein translocase subunit SecA from Beijerinckia indica subsp. indica (strain ATCC 9039 / DSM 1715 / NCIMB 8712).